A 368-amino-acid polypeptide reads, in one-letter code: 3-dehydroquinate synthase (368 aa).

NAD(+)-binding positions include 69–74 (DGEAYK), 103–107 (GVIGD), 127–128 (TT), lysine 140, and lysine 149. Positions 182, 245, and 262 each coordinate Zn(2+).

It belongs to the sugar phosphate cyclases superfamily. Dehydroquinate synthase family. It depends on Co(2+) as a cofactor. Zn(2+) is required as a cofactor. The cofactor is NAD(+).

It localises to the cytoplasm. It carries out the reaction 7-phospho-2-dehydro-3-deoxy-D-arabino-heptonate = 3-dehydroquinate + phosphate. It participates in metabolic intermediate biosynthesis; chorismate biosynthesis; chorismate from D-erythrose 4-phosphate and phosphoenolpyruvate: step 2/7. Catalyzes the conversion of 3-deoxy-D-arabino-heptulosonate 7-phosphate (DAHP) to dehydroquinate (DHQ). This is 3-dehydroquinate synthase from Pseudomonas paraeruginosa (strain DSM 24068 / PA7) (Pseudomonas aeruginosa (strain PA7)).